The chain runs to 570 residues: Peptidyl-prolyl cis-trans isomerase FKBP9 (570 aa).

The signal sequence occupies residues Met-1–Ala-24. 4 consecutive PPIase FKBP-type domains span residues Gly-54 to Trp-142, Ser-166 to His-254, Gly-278 to His-365, and Gly-389 to Val-477. 4 N-linked (GlcNAc...) asparagine glycosylation sites follow: Asn-174, Asn-286, Asn-302, and Asn-397. 2 EF-hand domains span residues Trp-488 to Ser-523 and Asn-533 to Asp-568. Ca(2+) is bound by residues Asp-501, Asp-503, Asn-505, Glu-507, Glu-512, Asp-546, Asn-548, Asp-550, Lys-552, and Glu-557. Positions His-567–Leu-570 match the Prevents secretion from ER motif.

In terms of processing, phosphorylated.

Its subcellular location is the endoplasmic reticulum lumen. It carries out the reaction [protein]-peptidylproline (omega=180) = [protein]-peptidylproline (omega=0). Its activity is regulated as follows. Inhibited by FK506. Its function is as follows. PPIases accelerate the folding of proteins during protein synthesis. The chain is Peptidyl-prolyl cis-trans isomerase FKBP9 (Fkbp9) from Rattus norvegicus (Rat).